The chain runs to 432 residues: Anaerobic glycerol-3-phosphate dehydrogenase subunit B (432 aa).

This sequence belongs to the anaerobic G-3-P dehydrogenase subunit B family. Composed of a catalytic GlpA/B dimer and of membrane bound GlpC. Requires FMN as cofactor.

It catalyses the reaction a quinone + sn-glycerol 3-phosphate = dihydroxyacetone phosphate + a quinol. It functions in the pathway polyol metabolism; glycerol degradation via glycerol kinase pathway; glycerone phosphate from sn-glycerol 3-phosphate (anaerobic route): step 1/1. Its function is as follows. Conversion of glycerol 3-phosphate to dihydroxyacetone. Uses fumarate or nitrate as electron acceptor. This chain is Anaerobic glycerol-3-phosphate dehydrogenase subunit B, found in Histophilus somni (strain 129Pt) (Haemophilus somnus).